A 186-amino-acid polypeptide reads, in one-letter code: Peptidyl-tRNA hydrolase (186 aa).

Residue Tyr16 participates in tRNA binding. Residue His21 is the Proton acceptor of the active site. The tRNA site is built by Tyr60 and Asn62.

This sequence belongs to the PTH family. As to quaternary structure, monomer.

The protein localises to the cytoplasm. It carries out the reaction an N-acyl-L-alpha-aminoacyl-tRNA + H2O = an N-acyl-L-amino acid + a tRNA + H(+). Functionally, hydrolyzes ribosome-free peptidyl-tRNAs (with 1 or more amino acids incorporated), which drop off the ribosome during protein synthesis, or as a result of ribosome stalling. In terms of biological role, catalyzes the release of premature peptidyl moieties from peptidyl-tRNA molecules trapped in stalled 50S ribosomal subunits, and thus maintains levels of free tRNAs and 50S ribosomes. This Tropheryma whipplei (strain Twist) (Whipple's bacillus) protein is Peptidyl-tRNA hydrolase.